We begin with the raw amino-acid sequence, 77 residues long: Dermaseptin-B9 (77 aa).

An N-terminal signal peptide occupies residues 1-22 (MAFLKKSLFLVLFLGLVSLSVC). 2 propeptides span residues 23–43 (EEEKRENEDEEEQEDDEQSEE) and 76–77 (EQ).

This sequence belongs to the frog skin active peptide (FSAP) family. Dermaseptin subfamily. Expressed by the skin glands.

Its subcellular location is the secreted. In terms of biological role, has antimicrobial activity. Exhibits a bactericidal activity towards several species of mollicutes, firmicutes and gracilicutes. This peptide is membranotropic and it efficiently depolarizes the plasma membrane. In Phyllomedusa bicolor (Two-colored leaf frog), this protein is Dermaseptin-B9 (DRG3).